Consider the following 415-residue polypeptide: Elongation factor 1-gamma 1 (415 aa).

N-acetylserine is present on Ser-2. The GST N-terminal domain occupies 2–78 (SQGTLYANFR…YLVKLSQDDK (77 aa)). Thr-32 carries the phosphothreonine modification. The GST C-terminal domain maps to 89–215 (DLNAQAQIIR…KDFKFADKPL (127 aa)). The segment at 212–256 (DKPLSPPQKKKEKKAPAAAPAASKKKEEAKPAATETETSSKKPKH) is disordered. The EF-1-gamma C-terminal domain occupies 254–415 (PKHPLELLGK…KEIVDGKVLK (162 aa)).

In terms of assembly, the eukaryotic elongation factor 1 complex (eEF1) is probably a heterohexamer. Two trimeric complexes, each composed of eEF1A (TEF1 or TEF2), eEF1Balpha (EFB1) and eEF1Bgamma (CAM1 or TEF4), are probably dimerized via the eF1Bgamma subunits. The eEF1B subcomplex with the GEF activity is formed of eEF1Balpha and eEF1Bgamma. CAM1 interacts with EFB1. Component of a complex bound to MXR1 promoter region.

Its subcellular location is the cytoplasm. It is found in the nucleus. It participates in protein biosynthesis; polypeptide chain elongation. Functionally, subunit of the eukaryotic elongation factor 1 complex (eEF1). Probably plays a role in anchoring the complex to other cellular components. May be involved in transcriptional regulation of MXR1. The protein is Elongation factor 1-gamma 1 (CAM1) of Saccharomyces cerevisiae (strain ATCC 204508 / S288c) (Baker's yeast).